Reading from the N-terminus, the 177-residue chain is ATP synthase subunit delta (177 aa).

The protein belongs to the ATPase delta chain family. In terms of assembly, F-type ATPases have 2 components, F(1) - the catalytic core - and F(0) - the membrane proton channel. F(1) has five subunits: alpha(3), beta(3), gamma(1), delta(1), epsilon(1). F(0) has three main subunits: a(1), b(2) and c(10-14). The alpha and beta chains form an alternating ring which encloses part of the gamma chain. F(1) is attached to F(0) by a central stalk formed by the gamma and epsilon chains, while a peripheral stalk is formed by the delta and b chains.

The protein resides in the cell inner membrane. Its function is as follows. F(1)F(0) ATP synthase produces ATP from ADP in the presence of a proton or sodium gradient. F-type ATPases consist of two structural domains, F(1) containing the extramembraneous catalytic core and F(0) containing the membrane proton channel, linked together by a central stalk and a peripheral stalk. During catalysis, ATP synthesis in the catalytic domain of F(1) is coupled via a rotary mechanism of the central stalk subunits to proton translocation. In terms of biological role, this protein is part of the stalk that links CF(0) to CF(1). It either transmits conformational changes from CF(0) to CF(1) or is implicated in proton conduction. The chain is ATP synthase subunit delta from Neisseria gonorrhoeae (strain NCCP11945).